The sequence spans 459 residues: DNA primase large subunit (459 aa).

[4Fe-4S] cluster-binding residues include C291, C369, C386, and C428.

The protein belongs to the eukaryotic-type primase large subunit family. Heterodimer of a catalytic subunit spp1/pri1 and a regulatory subunit spp2/pri2, also known as the DNA primase complex. Component of the alpha DNA polymerase complex (also known as the alpha DNA polymerase-primase complex) consisting of four subunits: the catalytic subunit pol1, the accessory subunit spb70/pol12, and the primase complex subunits spp1/pri1 and spp2/pri2 respectively. Interacts with orc2; preferentially associates with the unphosphorylated orc2 in G1 pre-Start prior to orc2 being phosphorylated by cdc2, the interaction is mediated by spb70 and might enable the association of the whole alpha DNA polymerase complex to orc2/spb70 complex on chromatin. [4Fe-4S] cluster is required as a cofactor.

It localises to the nucleus. Its subcellular location is the chromosome. In terms of biological role, regulatory subunit of the DNA primase complex and component of the DNA polymerase alpha complex (also known as the alpha DNA polymerase-primase complex - primosome/replisome) which play an essential role in the initiation of DNA synthesis. During the S phase of the cell cycle, the DNA polymerase alpha complex (composed of a catalytic subunit pol1, an accessory subunit spb70/pol12 and two primase subunits, the catalytic subunit spp1/pri1 and the regulatory subunit spp2/pri2) is recruited to DNA at the replicative forks. The primase subunit of the polymerase alpha complex initiates DNA synthesis by oligomerising short RNA primers on both leading and lagging strands. The sequence is that of DNA primase large subunit from Schizosaccharomyces pombe (strain 972 / ATCC 24843) (Fission yeast).